The following is a 125-amino-acid chain: Barwin (125 aa).

Q1 carries the pyrrolidone carboxylic acid modification. The region spanning Q1–D125 is the Barwin domain. 3 cysteine pairs are disulfide-bonded: C31/C63, C52/C86, and C66/C123.

Functionally, may be involved in a defense mechanism. Probable plant lectin. Binds weakly a chitin analog. The sequence is that of Barwin from Hordeum vulgare (Barley).